The primary structure comprises 380 residues: Cytochrome b (380 aa).

A run of 4 helical transmembrane segments spans residues 33–53 (FGSL…FLAM), 77–98 (WIIR…FLHV), 113–133 (WNIG…GYVL), and 178–198 (FFTL…LHLL). Heme b is bound by residues histidine 83 and histidine 97. Positions 182 and 196 each coordinate heme b. Histidine 201 serves as a coordination point for a ubiquinone. 4 helical membrane passes run 226 to 246 (TKDI…TLFS), 288 to 308 (LGGV…PILH), 320 to 340 (LSQL…WIGG), and 347 to 367 (FITI…ILMP).

This sequence belongs to the cytochrome b family. The cytochrome bc1 complex contains 11 subunits: 3 respiratory subunits (MT-CYB, CYC1 and UQCRFS1), 2 core proteins (UQCRC1 and UQCRC2) and 6 low-molecular weight proteins (UQCRH/QCR6, UQCRB/QCR7, UQCRQ/QCR8, UQCR10/QCR9, UQCR11/QCR10 and a cleavage product of UQCRFS1). This cytochrome bc1 complex then forms a dimer. Heme b is required as a cofactor.

The protein localises to the mitochondrion inner membrane. In terms of biological role, component of the ubiquinol-cytochrome c reductase complex (complex III or cytochrome b-c1 complex) that is part of the mitochondrial respiratory chain. The b-c1 complex mediates electron transfer from ubiquinol to cytochrome c. Contributes to the generation of a proton gradient across the mitochondrial membrane that is then used for ATP synthesis. The sequence is that of Cytochrome b (MT-CYB) from Pan paniscus (Pygmy chimpanzee).